The primary structure comprises 109 residues: Elongation factor G, chloroplastic (109 aa).

Belongs to the GTP-binding elongation factor family. EF-G/EF-2 subfamily.

It localises to the plastid. Its subcellular location is the chloroplast. It participates in protein biosynthesis; polypeptide chain elongation. Functionally, chloroplast-localized elongation factor EF-G involved in protein synthesis in plastids. Catalyzes the GTP-dependent ribosomal translocation step during translation elongation. During this step, the ribosome changes from the pre-translocational (PRE) to the post-translocational (POST) state as the newly formed A-site-bound peptidyl-tRNA and P-site-bound deacylated tRNA move to the P and E sites, respectively. Catalyzes the coordinated movement of the two tRNA molecules, the mRNA and conformational changes in the ribosome. The sequence is that of Elongation factor G, chloroplastic from Arachis hypogaea (Peanut).